The sequence spans 156 residues: Putative HTH-type transcriptional regulator BadM (156 aa).

The HTH rrf2-type domain occupies 4-130; that stretch reads RLQKSTMCGL…RSVSITSLLK (127 aa). Residues 136-156 form a disordered region; the sequence is RRKTERGPNGASARHSSAGRA. Positions 145 to 156 are enriched in low complexity; sequence GASARHSSAGRA.

The polypeptide is Putative HTH-type transcriptional regulator BadM (badM) (Rhodopseudomonas palustris (strain ATCC BAA-98 / CGA009)).